Consider the following 106-residue polypeptide: Large ribosomal subunit protein eL42 (106 aa).

The tract at residues 36–56 is disordered; it reads FAQGKRRYDRKQSGYGGQTKP.

The protein belongs to the eukaryotic ribosomal protein eL42 family.

The sequence is that of Large ribosomal subunit protein eL42 (RPL44) from Coprinopsis cinerea (strain Okayama-7 / 130 / ATCC MYA-4618 / FGSC 9003) (Inky cap fungus).